Reading from the N-terminus, the 260-residue chain is Large ribosomal subunit protein uL4 (260 aa).

The protein belongs to the universal ribosomal protein uL4 family. As to quaternary structure, part of the 50S ribosomal subunit.

One of the primary rRNA binding proteins, this protein initially binds near the 5'-end of the 23S rRNA. It is important during the early stages of 50S assembly. It makes multiple contacts with different domains of the 23S rRNA in the assembled 50S subunit and ribosome. Its function is as follows. Forms part of the polypeptide exit tunnel. This chain is Large ribosomal subunit protein uL4, found in Methanopyrus kandleri (strain AV19 / DSM 6324 / JCM 9639 / NBRC 100938).